A 110-amino-acid polypeptide reads, in one-letter code: Hydrogenase maturation factor HypA (110 aa).

Histidine 2 is a binding site for Ni(2+). Residues cysteine 73, cysteine 76, cysteine 87, and cysteine 89 each coordinate Zn(2+).

It belongs to the HypA/HybF family.

Its function is as follows. Involved in the maturation of [NiFe] hydrogenases. Required for nickel insertion into the metal center of the hydrogenase. The sequence is that of Hydrogenase maturation factor HypA from Archaeoglobus fulgidus (strain ATCC 49558 / DSM 4304 / JCM 9628 / NBRC 100126 / VC-16).